A 226-amino-acid polypeptide reads, in one-letter code: Teichuronic acid biosynthesis protein TuaF (226 aa).

2 helical membrane passes run 15–35 (NIIW…ILPS) and 202–222 (VLGV…PEFF).

It is found in the cell membrane. It functions in the pathway cell wall biogenesis; teichuronic acid biosynthesis. The protein is Teichuronic acid biosynthesis protein TuaF (tuaF) of Bacillus subtilis (strain 168).